A 170-amino-acid chain; its full sequence is Ribosomal RNA small subunit methyltransferase G (170 aa).

Residues G70, L75, 120 to 121 (AE), and R138 contribute to the S-adenosyl-L-methionine site.

It belongs to the methyltransferase superfamily. RNA methyltransferase RsmG family.

The protein localises to the cytoplasm. In terms of biological role, specifically methylates the N7 position of guanine in position 518 of 16S rRNA. This chain is Ribosomal RNA small subunit methyltransferase G, found in Mycobacterium ulcerans (strain Agy99).